The primary structure comprises 512 residues: Cytochrome P450 84A4 (512 aa).

Residues L7–R24 traverse the membrane as a helical segment. Residue C447 coordinates heme.

This sequence belongs to the cytochrome P450 family. It depends on heme as a cofactor. Expressed in seedlings, roots, stems and inflorescence nodes. Low or no expression in leaves, flowers, seeds and lignifying tissue.

It localises to the membrane. In terms of biological role, cytochrome P450 involved in the production of catechol-substituted substrates needed for the arabidopyrones biosynthesis. Converts p-coumaraldehyde into caffealdehyde. This Arabidopsis thaliana (Mouse-ear cress) protein is Cytochrome P450 84A4 (CYP84A4).